The chain runs to 224 residues: Na(+)-translocating NADH-quinone reductase subunit D (224 aa).

The next 5 membrane-spanning stretches (helical) occupy residues Thr-43–Ile-63, Ile-67–Val-87, Val-104–Met-124, Phe-132–Val-152, and Asn-179–Leu-199.

It belongs to the NqrDE/RnfAE family. In terms of assembly, composed of six subunits; NqrA, NqrB, NqrC, NqrD, NqrE and NqrF.

The protein resides in the cell inner membrane. The enzyme catalyses a ubiquinone + n Na(+)(in) + NADH + H(+) = a ubiquinol + n Na(+)(out) + NAD(+). Functionally, NQR complex catalyzes the reduction of ubiquinone-1 to ubiquinol by two successive reactions, coupled with the transport of Na(+) ions from the cytoplasm to the periplasm. NqrA to NqrE are probably involved in the second step, the conversion of ubisemiquinone to ubiquinol. The sequence is that of Na(+)-translocating NADH-quinone reductase subunit D from Pseudomonas aeruginosa (strain LESB58).